The primary structure comprises 379 residues: Lipoyl synthase, mitochondrial (379 aa).

[4Fe-4S] cluster-binding residues include C106, C111, C117, C137, C141, C144, and S352. The 220-residue stretch at 122 to 341 folds into the Radical SAM core domain; the sequence is EHGTQTATIM…EERGNALGFL (220 aa).

Belongs to the radical SAM superfamily. Lipoyl synthase family. Requires [4Fe-4S] cluster as cofactor.

It localises to the mitochondrion. It carries out the reaction [[Fe-S] cluster scaffold protein carrying a second [4Fe-4S](2+) cluster] + N(6)-octanoyl-L-lysyl-[protein] + 2 oxidized [2Fe-2S]-[ferredoxin] + 2 S-adenosyl-L-methionine + 4 H(+) = [[Fe-S] cluster scaffold protein] + N(6)-[(R)-dihydrolipoyl]-L-lysyl-[protein] + 4 Fe(3+) + 2 hydrogen sulfide + 2 5'-deoxyadenosine + 2 L-methionine + 2 reduced [2Fe-2S]-[ferredoxin]. Its pathway is protein modification; protein lipoylation via endogenous pathway; protein N(6)-(lipoyl)lysine from octanoyl-[acyl-carrier-protein]: step 2/2. Functionally, catalyzes the radical-mediated insertion of two sulfur atoms into the C-6 and C-8 positions of the octanoyl moiety bound to the lipoyl domains of lipoate-dependent enzymes, thereby converting the octanoylated domains into lipoylated derivatives. This Drosophila erecta (Fruit fly) protein is Lipoyl synthase, mitochondrial.